Reading from the N-terminus, the 122-residue chain is NADH-quinone oxidoreductase subunit A (122 aa).

The next 3 membrane-spanning stretches (helical) occupy residues 10-30, 66-86, and 91-111; these read MIVLIFLLLGILLPVVALTLG, IFALLFVIFDVETLFLYPWAV, and LGLFALIEMLIFVVMLLVGLA.

It belongs to the complex I subunit 3 family. In terms of assembly, NDH-1 is composed of 14 different subunits. Subunits NuoA, H, J, K, L, M, N constitute the membrane sector of the complex.

The protein localises to the cell membrane. It catalyses the reaction a quinone + NADH + 5 H(+)(in) = a quinol + NAD(+) + 4 H(+)(out). In terms of biological role, NDH-1 shuttles electrons from NADH, via FMN and iron-sulfur (Fe-S) centers, to quinones in the respiratory chain. The immediate electron acceptor for the enzyme in this species is believed to be a menaquinone. Couples the redox reaction to proton translocation (for every two electrons transferred, four hydrogen ions are translocated across the cytoplasmic membrane), and thus conserves the redox energy in a proton gradient. The protein is NADH-quinone oxidoreductase subunit A of Bacillus mycoides (strain KBAB4) (Bacillus weihenstephanensis).